Here is a 464-residue protein sequence, read N- to C-terminus: tRNA modification GTPase MnmE (464 aa).

The (6S)-5-formyl-5,6,7,8-tetrahydrofolate site is built by R23, E84, and R123. Positions 216–386 (GARATLVGRP…LGATVARLLL (171 aa)) constitute a TrmE-type G domain. Residue N226 coordinates K(+). Residues 226–231 (NAGKSS), 245–251 (TPIPGTT), and 270–273 (DTAG) contribute to the GTP site. S230 is a Mg(2+) binding site. Positions 245, 247, and 250 each coordinate K(+). Mg(2+) is bound at residue T251. A (6S)-5-formyl-5,6,7,8-tetrahydrofolate-binding site is contributed by K464.

Belongs to the TRAFAC class TrmE-Era-EngA-EngB-Septin-like GTPase superfamily. TrmE GTPase family. In terms of assembly, homodimer. Heterotetramer of two MnmE and two MnmG subunits. K(+) is required as a cofactor.

It localises to the cytoplasm. Functionally, exhibits a very high intrinsic GTPase hydrolysis rate. Involved in the addition of a carboxymethylaminomethyl (cmnm) group at the wobble position (U34) of certain tRNAs, forming tRNA-cmnm(5)s(2)U34. This is tRNA modification GTPase MnmE from Roseiflexus castenholzii (strain DSM 13941 / HLO8).